The following is a 285-amino-acid chain: Xanthoxin dehydrogenase (285 aa).

Residue S2 is modified to N-acetylserine.

Belongs to the short-chain dehydrogenases/reductases (SDR) family. In terms of tissue distribution, predominantly in roots and stems, and at lower levels in leaves and seeds.

It localises to the cytoplasm. It carries out the reaction 2-cis,4-trans-xanthoxin + NAD(+) = 2-cis-(+)-abscisic aldehyde + NADH + H(+). The catalysed reaction is 2-trans,4-trans-xanthoxin + NAD(+) = 2-trans-(+)-abscisic aldehyde + NADH + H(+). Its function is as follows. Involved in the biosynthesis of abscisic acid. Catalyzes the conversion of xanthoxin to abscisic aldehyde. This Arabidopsis thaliana (Mouse-ear cress) protein is Xanthoxin dehydrogenase.